The chain runs to 304 residues: Putative S-adenosyl-L-methionine-dependent methyltransferase MUL_0816 (304 aa).

Residues Asp-130 and 159–160 each bind S-adenosyl-L-methionine; that span reads DL.

Belongs to the UPF0677 family.

Exhibits S-adenosyl-L-methionine-dependent methyltransferase activity. The protein is Putative S-adenosyl-L-methionine-dependent methyltransferase MUL_0816 of Mycobacterium ulcerans (strain Agy99).